Consider the following 233-residue polypeptide: Guanylate kinase (233 aa).

The Guanylate kinase-like domain occupies 3–184; sequence GTIFIISAPS…AVEQLRAIVL (182 aa). Residue 10 to 17 participates in ATP binding; sequence APSGSGKS.

It belongs to the guanylate kinase family.

Its subcellular location is the cytoplasm. It catalyses the reaction GMP + ATP = GDP + ADP. Its function is as follows. Essential for recycling GMP and indirectly, cGMP. The chain is Guanylate kinase from Koribacter versatilis (strain Ellin345).